Consider the following 272-residue polypeptide: ATP phosphoribosyltransferase regulatory subunit (272 aa).

Belongs to the class-II aminoacyl-tRNA synthetase family. HisZ subfamily. In terms of assembly, heteromultimer composed of HisG and HisZ subunits.

The protein localises to the cytoplasm. Its pathway is amino-acid biosynthesis; L-histidine biosynthesis; L-histidine from 5-phospho-alpha-D-ribose 1-diphosphate: step 1/9. Its function is as follows. Required for the first step of histidine biosynthesis. May allow the feedback regulation of ATP phosphoribosyltransferase activity by histidine. The sequence is that of ATP phosphoribosyltransferase regulatory subunit from Staphylococcus aureus (strain MRSA252).